A 498-amino-acid chain; its full sequence is 3-octaprenyl-4-hydroxybenzoate carboxy-lyase (498 aa).

Asparagine 175 is a Mn(2+) binding site. Prenylated FMN contacts are provided by residues 178–180 (IYR), 192–194 (RWL), and 197–198 (RG). Glutamate 241 lines the Mn(2+) pocket. Aspartate 290 serves as the catalytic Proton donor.

The protein belongs to the UbiD family. Homohexamer. Prenylated FMN serves as cofactor. Mn(2+) is required as a cofactor.

It is found in the cell membrane. The catalysed reaction is a 4-hydroxy-3-(all-trans-polyprenyl)benzoate + H(+) = a 2-(all-trans-polyprenyl)phenol + CO2. Its pathway is cofactor biosynthesis; ubiquinone biosynthesis. Catalyzes the decarboxylation of 3-octaprenyl-4-hydroxy benzoate to 2-octaprenylphenol, an intermediate step in ubiquinone biosynthesis. In Yersinia pseudotuberculosis serotype I (strain IP32953), this protein is 3-octaprenyl-4-hydroxybenzoate carboxy-lyase.